A 92-amino-acid chain; its full sequence is Small ribosomal subunit protein uS19c (92 aa).

This sequence belongs to the universal ribosomal protein uS19 family.

It is found in the plastid. The protein localises to the chloroplast. Its function is as follows. Protein S19 forms a complex with S13 that binds strongly to the 16S ribosomal RNA. The polypeptide is Small ribosomal subunit protein uS19c (Oltmannsiellopsis viridis (Marine flagellate)).